The following is a 402-amino-acid chain: Multidrug resistance protein MdtH (402 aa).

Topologically, residues 1–12 (MSRVSQARNLGK) are cytoplasmic. Residues 13 to 33 (YFLLIDNMLVVLGFFVVFPLI) form a helical membrane-spanning segment. Topologically, residues 34–98 (SIRFVDQMGW…GFATMGIAHE (65 aa)) are periplasmic. A helical membrane pass occupies residues 99-116 (PWLLWFSCFLSGLGGTLF). At 117 to 138 (DPPRSALVVKLIRPEQRGRFFS) the chain is on the cytoplasmic side. The helical transmembrane segment at 139 to 159 (LLMMQDSAGAVIGALLGSWLL) threads the bilayer. Topologically, residues 160–164 (QYDFR) are periplasmic. A helical membrane pass occupies residues 165-185 (LVCATGAILFILCALFNAWLL). Topologically, residues 186–213 (PAWKLSTARTPVREGMRRVMSNKRFVTY) are cytoplasmic. Residues 214-234 (VLTLAGYYMLAVQVMLMLPIM) form a helical membrane-spanning segment. The Periplasmic segment spans residues 235 to 243 (VNDIAGSPA). The helical transmembrane segment at 244–264 (AVKWMYAIEACLSLTLLYPIA) threads the bilayer. The Cytoplasmic segment spans residues 265-276 (RWSEKRFRLEHR). The chain crosses the membrane as a helical span at residues 277–297 (LMAGLLVMSLSMLPIGMVGNL). Residues 298 to 299 (QQ) lie on the Periplasmic side of the membrane. Residues 300-320 (LFTLICAFYIGSVIAEPARET) traverse the membrane as a helical segment. At 321-339 (LSASPADARARGSYMGFSR) the chain is on the cytoplasmic side. Residues 340 to 360 (LGLAIGGAISYIGGGWLFDMG) form a helical membrane-spanning segment. Topologically, residues 361 to 367 (KALAQPE) are periplasmic. Residues 368–388 (LPWMMLGIIGFITFLALGWQF) traverse the membrane as a helical segment. Over 389-402 (SHKRTPRRMLEPGA) the chain is Cytoplasmic.

This sequence belongs to the major facilitator superfamily. DHA1 family. MdtH (TC 2.A.1.2.21) subfamily.

It localises to the cell inner membrane. The polypeptide is Multidrug resistance protein MdtH (Salmonella typhi).